The chain runs to 543 residues: CTP synthase (543 aa).

An amidoligase domain region spans residues 1-270 (MNNLTSTKFI…DTQILKHFNI (270 aa)). S18 is a CTP binding site. S18 provides a ligand contact to UTP. ATP is bound by residues 19 to 24 (SLGKGL) and D76. Mg(2+) contacts are provided by D76 and E144. CTP is bound by residues 151–153 (DIE), 191–196 (KTKPTQ), and K227. UTP is bound by residues 191 to 196 (KTKPTQ) and K227. Residues 295-537 (TIAIIGKYIK…IQASLNYQET (243 aa)) form the Glutamine amidotransferase type-1 domain. G356 provides a ligand contact to L-glutamine. C383 acts as the Nucleophile; for glutamine hydrolysis in catalysis. L-glutamine contacts are provided by residues 384-387 (MGMQ), E407, and R462. Catalysis depends on residues H510 and E512.

The protein belongs to the CTP synthase family. As to quaternary structure, homotetramer.

It carries out the reaction UTP + L-glutamine + ATP + H2O = CTP + L-glutamate + ADP + phosphate + 2 H(+). The enzyme catalyses L-glutamine + H2O = L-glutamate + NH4(+). It catalyses the reaction UTP + NH4(+) + ATP = CTP + ADP + phosphate + 2 H(+). The protein operates within pyrimidine metabolism; CTP biosynthesis via de novo pathway; CTP from UDP: step 2/2. Allosterically activated by GTP, when glutamine is the substrate; GTP has no effect on the reaction when ammonia is the substrate. The allosteric effector GTP functions by stabilizing the protein conformation that binds the tetrahedral intermediate(s) formed during glutamine hydrolysis. Inhibited by the product CTP, via allosteric rather than competitive inhibition. Functionally, catalyzes the ATP-dependent amination of UTP to CTP with either L-glutamine or ammonia as the source of nitrogen. Regulates intracellular CTP levels through interactions with the four ribonucleotide triphosphates. In Ehrlichia ruminantium (strain Gardel), this protein is CTP synthase.